The following is a 149-amino-acid chain: MLNSIKLSAIVHATEDEDKVLEAIEFFIPENVDEEKIDLDVVETQGYFGNPIKIINVNVEGKEAKKIFKHIIDLIKSDDKNINKLKKDLHLRVEDNKFYVRFDKQKAYLGECRVVDGDDIIRAVFNFKIFTPKNKEEKVKEIVANELGF.

This is an uncharacterized protein from Methanocaldococcus jannaschii (strain ATCC 43067 / DSM 2661 / JAL-1 / JCM 10045 / NBRC 100440) (Methanococcus jannaschii).